The primary structure comprises 484 residues: L-carnitine dehydrogenase/betainyl-CoA thioesterase (484 aa).

The tract at residues 1-322 (MKIAAIGGGV…ENRFYARNGK (322 aa)) is L-carnitine dehydrogenase. Residue 7–12 (GGGVIG) coordinates NAD(+). The tract at residues 323-484 (VQADYPLRLH…RAVRLKETSA (162 aa)) is betainyl-CoA thioesterase.

The protein in the N-terminal section; belongs to the 3-hydroxyacyl-CoA dehydrogenase family. L-carnitine dehydrogenase subfamily. In the C-terminal section; belongs to the betainyl-CoA thioesterase family. As to quaternary structure, homodimer.

The protein localises to the cytoplasm. It catalyses the reaction carnitine + NAD(+) = 3-dehydrocarnitine + NADH + H(+). It carries out the reaction N,N,N-trimethylglycyl-CoA + H2O = glycine betaine + CoA + H(+). The protein operates within amine and polyamine metabolism; carnitine metabolism. In terms of biological role, multifunctional enzyme that catalyzes the NAD(+)-dependent oxidation of L-carnitine to 3-dehydrocarnitine and the cleavage of betainyl-CoA (N,N,N-trimethylglycyl-CoA) into glycine betaine and coenzyme A. This is L-carnitine dehydrogenase/betainyl-CoA thioesterase from Agrobacterium fabrum (strain C58 / ATCC 33970) (Agrobacterium tumefaciens (strain C58)).